We begin with the raw amino-acid sequence, 210 residues long: Flagellar transcriptional regulator FlhC (210 aa).

Zn(2+)-binding residues include Cys-144, Cys-147, Cys-164, and Cys-167.

This sequence belongs to the FlhC family. As to quaternary structure, heterohexamer composed of two FlhC and four FlhD subunits. Each FlhC binds a FlhD dimer, forming a heterotrimer, and a hexamer assembles by dimerization of two heterotrimers. Zn(2+) is required as a cofactor.

Its subcellular location is the cytoplasm. Its function is as follows. Functions in complex with FlhD as a master transcriptional regulator that regulates transcription of several flagellar and non-flagellar operons by binding to their promoter region. Activates expression of class 2 flagellar genes, including fliA, which is a flagellum-specific sigma factor that turns on the class 3 genes. Also regulates genes whose products function in a variety of physiological pathways. The polypeptide is Flagellar transcriptional regulator FlhC (Cupriavidus pinatubonensis (strain JMP 134 / LMG 1197) (Cupriavidus necator (strain JMP 134))).